The chain runs to 146 residues: Small ribosomal subunit protein eS17 (146 aa).

This sequence belongs to the eukaryotic ribosomal protein eS17 family. Component of the small ribosomal subunit (SSU). Mature N.crassa ribosomes consist of a small (40S) and a large (60S) subunit. The 40S small subunit contains 1 molecule of ribosomal RNA (18S rRNA) and at least 32 different proteins. The large 60S subunit contains 3 rRNA molecules (26S, 5.8S and 5S rRNA) and at least 42 different proteins.

The protein localises to the cytoplasm. Component of the ribosome, a large ribonucleoprotein complex responsible for the synthesis of proteins in the cell. The small ribosomal subunit (SSU) binds messenger RNAs (mRNAs) and translates the encoded message by selecting cognate aminoacyl-transfer RNA (tRNA) molecules. The large subunit (LSU) contains the ribosomal catalytic site termed the peptidyl transferase center (PTC), which catalyzes the formation of peptide bonds, thereby polymerizing the amino acids delivered by tRNAs into a polypeptide chain. The nascent polypeptides leave the ribosome through a tunnel in the LSU and interact with protein factors that function in enzymatic processing, targeting, and the membrane insertion of nascent chains at the exit of the ribosomal tunnel. This is Small ribosomal subunit protein eS17 (rps-17) from Neurospora crassa (strain ATCC 24698 / 74-OR23-1A / CBS 708.71 / DSM 1257 / FGSC 987).